The chain runs to 187 residues: Elongation factor P (187 aa).

This sequence belongs to the elongation factor P family.

The protein resides in the cytoplasm. It participates in protein biosynthesis; polypeptide chain elongation. Involved in peptide bond synthesis. Stimulates efficient translation and peptide-bond synthesis on native or reconstituted 70S ribosomes in vitro. Probably functions indirectly by altering the affinity of the ribosome for aminoacyl-tRNA, thus increasing their reactivity as acceptors for peptidyl transferase. This Rhodococcus opacus (strain B4) protein is Elongation factor P.